A 1902-amino-acid chain; its full sequence is PI-type proteinase (1902 aa).

The signal sequence occupies residues 1–33; the sequence is MQRKKKGLSILLAGTVALGALAVLPVGEIQAKA. Residues 34-187 constitute a propeptide that is removed on maturation; that stretch reads AISQQTKGSS…VTLAKVYYPT (154 aa). A Peptidase S8 domain is found at 191–697; it reads ANSMANVQAV…AGLVDVKAAI (507 aa). Catalysis depends on charge relay system residues Asp-217, His-281, and Ser-620. Positions 1796-1874 are disordered; that stretch reads GKGDGTTGTS…GALPKTGETT (79 aa). Positions 1797 to 1812 are enriched in gly residues; the sequence is KGDGTTGTSDKGGGQG. The segment covering 1830 to 1843 has biased composition (polar residues); the sequence is SQPSSGGNIPTNPA. Positions 1867 to 1871 match the LPXTG sorting signal motif; the sequence is LPKTG. Thr-1870 is subject to Pentaglycyl murein peptidoglycan amidated threonine. A propeptide spans 1871–1902 (removed by sortase); it reads GETTERPAFGFLGVIVVILMGVLGLKRKQREE.

This sequence belongs to the peptidase S8 family.

It is found in the secreted. It localises to the cell wall. The catalysed reaction is Endopeptidase activity with very broad specificity, although some subsite preference have been noted, e.g. large hydrophobic residues in the P1 and P4 positions, and Pro in the P2 position. Best known for its action on caseins, although it has been shown to hydrolyze hemoglobin and oxidized insulin B-chain.. Its function is as follows. Protease which breaks down milk proteins during the growth of the bacteria on milk. The chain is PI-type proteinase (prtP) from Lactococcus lactis subsp. cremoris (Streptococcus cremoris).